The chain runs to 471 residues: 4-aminobutyrate aminotransferase (471 aa).

Position 135 to 136 (135 to 136 (GA)) interacts with pyridoxal 5'-phosphate. Substrate is bound at residue Arg-192. Lys-326 carries the N6-(pyridoxal phosphate)lysine modification. Thr-351 contacts pyridoxal 5'-phosphate.

This sequence belongs to the class-III pyridoxal-phosphate-dependent aminotransferase family. As to quaternary structure, homodimer and homotetramer. Pyridoxal 5'-phosphate is required as a cofactor.

The protein resides in the cytoplasm. It carries out the reaction 4-aminobutanoate + 2-oxoglutarate = succinate semialdehyde + L-glutamate. Functionally, required for the degradation of gamma-aminobutyric acid (GABA), which is important for utilization of GABA as nitrogen source and for oxidative stress tolerance. Deaminates GABA to succinate semialdehyde, which in turn is converted to succinate by the succinate-semialdehyde dehydrogenase UGA2. Cannot transaminate beta-alanine (BAL). The protein is 4-aminobutyrate aminotransferase (UGA1) of Saccharomyces cerevisiae (strain ATCC 204508 / S288c) (Baker's yeast).